A 199-amino-acid chain; its full sequence is Nucleoside triphosphate pyrophosphatase (199 aa).

Residue Asp76 is the Proton acceptor of the active site.

The protein belongs to the Maf family. A divalent metal cation is required as a cofactor.

It is found in the cytoplasm. It carries out the reaction a ribonucleoside 5'-triphosphate + H2O = a ribonucleoside 5'-phosphate + diphosphate + H(+). The enzyme catalyses a 2'-deoxyribonucleoside 5'-triphosphate + H2O = a 2'-deoxyribonucleoside 5'-phosphate + diphosphate + H(+). In terms of biological role, nucleoside triphosphate pyrophosphatase. May have a dual role in cell division arrest and in preventing the incorporation of modified nucleotides into cellular nucleic acids. In Caulobacter vibrioides (strain ATCC 19089 / CIP 103742 / CB 15) (Caulobacter crescentus), this protein is Nucleoside triphosphate pyrophosphatase.